A 295-amino-acid chain; its full sequence is Pyridoxal 5'-phosphate synthase subunit PdxS (295 aa).

Residue aspartate 25 coordinates D-ribose 5-phosphate. Lysine 82 serves as the catalytic Schiff-base intermediate with D-ribose 5-phosphate. Glycine 154 is a binding site for D-ribose 5-phosphate. Residue arginine 166 participates in D-glyceraldehyde 3-phosphate binding. Residues glycine 215 and 236–237 (GS) contribute to the D-ribose 5-phosphate site.

It belongs to the PdxS/SNZ family. In terms of assembly, in the presence of PdxT, forms a dodecamer of heterodimers.

It carries out the reaction aldehydo-D-ribose 5-phosphate + D-glyceraldehyde 3-phosphate + L-glutamine = pyridoxal 5'-phosphate + L-glutamate + phosphate + 3 H2O + H(+). It participates in cofactor biosynthesis; pyridoxal 5'-phosphate biosynthesis. Functionally, catalyzes the formation of pyridoxal 5'-phosphate from ribose 5-phosphate (RBP), glyceraldehyde 3-phosphate (G3P) and ammonia. The ammonia is provided by the PdxT subunit. Can also use ribulose 5-phosphate and dihydroxyacetone phosphate as substrates, resulting from enzyme-catalyzed isomerization of RBP and G3P, respectively. In Heliobacterium modesticaldum (strain ATCC 51547 / Ice1), this protein is Pyridoxal 5'-phosphate synthase subunit PdxS.